A 427-amino-acid chain; its full sequence is Thymidine phosphorylase (427 aa).

This sequence belongs to the thymidine/pyrimidine-nucleoside phosphorylase family. As to quaternary structure, homodimer.

It carries out the reaction thymidine + phosphate = 2-deoxy-alpha-D-ribose 1-phosphate + thymine. Functionally, the enzymes which catalyze the reversible phosphorolysis of pyrimidine nucleosides are involved in the degradation of these compounds and in their utilization as carbon and energy sources, or in the rescue of pyrimidine bases for nucleotide synthesis. The chain is Thymidine phosphorylase (deoA) from Mycobacterium tuberculosis (strain CDC 1551 / Oshkosh).